The sequence spans 281 residues: Cytochrome bc1 complex cytochrome c subunit (281 aa).

Residues 17-37 (AAGAMALAVGLTGAGILVNAV) form a helical membrane-spanning segment. 2 consecutive Cytochrome c domains span residues 52–132 (ALIQ…EANG) and 162–240 (ADVA…KSAK). Cys-65, Cys-68, His-69, Cys-175, Cys-178, and His-179 together coordinate heme c. A helical transmembrane segment spans residues 259–279 (GMMMWLVGIVVLVAAAMWIGS).

As to quaternary structure, the cytochrome bc1 complex is composed of a cytochrome b (QcrB), the Rieske iron-sulfur protein (QcrA) and a diheme cytochrome c (QcrC) subunit. The bc1 complex forms a supercomplex with cytochrome c oxidase (cytochrome aa3). In terms of processing, binds 2 heme c groups covalently per subunit.

The protein resides in the cell membrane. It catalyses the reaction a quinol + 2 Fe(III)-[cytochrome c](out) = a quinone + 2 Fe(II)-[cytochrome c](out) + 2 H(+)(out). Its function is as follows. Cytochrome c1 subunit of the cytochrome bc1 complex, an essential component of the respiratory electron transport chain required for ATP synthesis. The bc1 complex catalyzes the oxidation of menaquinol and the reduction of cytochrome c in the respiratory chain. The bc1 complex operates through a Q-cycle mechanism that couples electron transfer to generation of the proton gradient that drives ATP synthesis. This chain is Cytochrome bc1 complex cytochrome c subunit (qcrC), found in Corynebacterium diphtheriae (strain ATCC 700971 / NCTC 13129 / Biotype gravis).